A 175-amino-acid polypeptide reads, in one-letter code: Anterior gradient protein 2 homolog (175 aa).

The N-terminal stretch at 1 to 20 (MEKFSVSAILLLVAISGTLA) is a signal peptide. Residues 21–40 (KDTTVKSGAKKDPKDSRPKL) are required to promote cell adhesion. The tract at residues 24-44 (TVKSGAKKDPKDSRPKLPQTL) is disordered. The segment covering 29 to 38 (AKKDPKDSRP) has biased composition (basic and acidic residues). 2 consecutive short sequence motifs (homodimer stabilization; interchain) follow at residues 45-54 (SRGWGDQLIW) and 60-67 (EALYRSKT).

The protein belongs to the AGR family. Monomer and homodimer. Interacts with LYPD3 and DAG1 (alphaDAG1). Interacts with MUC2; disulfide-linked. Expressed in lung, skeletal muscle, testis, liver, stomach, colon, small intestine, the goblet cells of the intestine and the mucuous neck cells of the stomach.

Its subcellular location is the secreted. It is found in the endoplasmic reticulum. Required for MUC2 post-transcriptional synthesis and secretion. May play a role in the production of mucus by intestinal cells. Proto-oncogene that may play a role in cell migration, cell differentiation and cell growth. Promotes cell adhesion. This Mus musculus (Mouse) protein is Anterior gradient protein 2 homolog (Agr2).